The chain runs to 199 residues: MASDFWLIAGLGNPGSKYEGTRHNMGFMTADVLAERWSVNFSDHKGLAMLGKGVMNLSGRNVKFFLAKPLTYMNESGNAVASISAYYQIEPDHIVVIHDDMDLDFGRIKVKAGGSAGGHNGIKSIDRSLGTPKYARVRMGVGHAQRGAHAHDNTVNWVLGGFGPDQRKQLPEFLADGADAAETIIFDGLAKAQERFNGR.

Tyr-18 contributes to the tRNA binding site. His-23 acts as the Proton acceptor in catalysis. Residues Tyr-72, Asn-74, and Asn-120 each coordinate tRNA.

This sequence belongs to the PTH family. As to quaternary structure, monomer.

It is found in the cytoplasm. It carries out the reaction an N-acyl-L-alpha-aminoacyl-tRNA + H2O = an N-acyl-L-amino acid + a tRNA + H(+). In terms of biological role, hydrolyzes ribosome-free peptidyl-tRNAs (with 1 or more amino acids incorporated), which drop off the ribosome during protein synthesis, or as a result of ribosome stalling. Catalyzes the release of premature peptidyl moieties from peptidyl-tRNA molecules trapped in stalled 50S ribosomal subunits, and thus maintains levels of free tRNAs and 50S ribosomes. This is Peptidyl-tRNA hydrolase from Bifidobacterium adolescentis (strain ATCC 15703 / DSM 20083 / NCTC 11814 / E194a).